A 120-amino-acid polypeptide reads, in one-letter code: Large ribosomal subunit protein uL18 (120 aa).

The protein belongs to the universal ribosomal protein uL18 family. In terms of assembly, part of the 50S ribosomal subunit; part of the 5S rRNA/L5/L18/L25 subcomplex. Contacts the 5S and 23S rRNAs.

Functionally, this is one of the proteins that bind and probably mediate the attachment of the 5S RNA into the large ribosomal subunit, where it forms part of the central protuberance. The polypeptide is Large ribosomal subunit protein uL18 (Clostridium novyi (strain NT)).